Consider the following 301-residue polypeptide: Probable alpha-L-glutamate ligase (301 aa).

Positions 104 to 287 (LQLLARKGIG…VATKVIEFIE (184 aa)) constitute an ATP-grasp domain. Residues Lys-141, 178–179 (EF), Asp-187, and 211–213 (RSN) contribute to the ATP site. The Mg(2+) site is built by Asp-248, Glu-260, and Asn-262. 3 residues coordinate Mn(2+): Asp-248, Glu-260, and Asn-262.

It belongs to the RimK family. Mg(2+) is required as a cofactor. The cofactor is Mn(2+).

The protein is Probable alpha-L-glutamate ligase of Nitrosococcus oceani (strain ATCC 19707 / BCRC 17464 / JCM 30415 / NCIMB 11848 / C-107).